The sequence spans 714 residues: MNTLQGPVSFKDVAVDFTQEEWQQLDPDEKITYRDVMLENYSHLVSVGYDTTKPNVIIKLEQGEEPWIMGGEFPCQHSPEAWRVDDLIERIQENEDKHSRQAACINSKTLTEEKENTFSQIYMETSLVPSSIIAHNCVSCGKNLESISQLISSDGSYARTKPDECNECGKTYHGEKMCEFNQNGDTYSHNEENILQKISILEKPFEYNECMEALDNEAVFIAHKRAYIGEKPYEWNDSGPDFIQMSNFNAYQRSQMEMKPFECSECGKSFCKKSKFIIHQRAHTGEKPYECNVCGKSFSQKGTLTVHRRSHLEEKPYKCNECGKTFCQKLHLTQHLRTHSGEKPYECSECGKTFCQKTHLTLHQRNHSGERPYPCNECGKSFSRKSALSDHQRTHTGEKLYKCNECGKSYYRKSTLITHQRTHTGEKPYQCSECGKFFSRVSYLTIHYRSHLEEKPYECNECGKTFNLNSAFIRHRKVHTEEKSHECSECGKFSQLYLTDHHTAHLEEKPYECNECGKTFLVNSAFDGHQPLPKGEKSYECNVCGKLFNELSYYTEHYRSHSEEKPYGCSECGKTFSHNSSLFRHQRVHTGEKPYECYECGKFFSQKSYLTIHHRIHSGEKPYECSKCGKVFSRMSNLTVHYRSHSGEKPYECNECGKVFSQKSYLTVHYRTHSGEKPYECNECGKKFHHRSAFNSHQRIHRRGNMNVLDVENL.

One can recognise a KRAB domain in the interval 8-79 (VSFKDVAVDF…GGEFPCQHSP (72 aa)). Residues Lys-97 and Lys-259 each participate in a glycyl lysine isopeptide (Lys-Gly) (interchain with G-Cter in SUMO2) cross-link. A required for interaction with RB1 region spans residues 171–260 (TYHGEKMCEF…YQRSQMEMKP (90 aa)). C2H2-type zinc fingers lie at residues 261-283 (FECS…QRAH) and 289-311 (YECN…RRSH). A Glycyl lysine isopeptide (Lys-Gly) (interchain with G-Cter in SUMO2) cross-link involves residue Lys-315. 7 consecutive C2H2-type zinc fingers follow at residues 317 to 339 (YKCN…LRTH), 345 to 367 (YECS…QRNH), 373 to 395 (YPCN…QRTH), 401 to 423 (YKCN…QRTH), 429 to 451 (YQCS…YRSH), 457 to 479 (YECN…RKVH), and 485 to 505 (HECS…HTAH). A Glycyl lysine isopeptide (Lys-Gly) (interchain with G-Cter in SUMO2) cross-link involves residue Lys-357. The tract at residues 417–714 (ITHQRTHTGE…NMNVLDVENL (298 aa)) is interaction with AR. Residues 511–533 (YECNECGKTFLVNSAFDGHQPLP) form a C2H2-type 10; degenerate zinc finger. Glycyl lysine isopeptide (Lys-Gly) (interchain with G-Cter in SUMO2) cross-links involve residues Lys-534 and Lys-537. 6 consecutive C2H2-type zinc fingers follow at residues 539-561 (YECN…YRSH), 567-589 (YGCS…QRVH), 595-617 (YECY…HRIH), 623-645 (YECS…YRSH), 651-673 (YECN…YRTH), and 679-701 (YECN…QRIH).

The protein belongs to the krueppel C2H2-type zinc-finger protein family. In terms of assembly, interacts with AR and RB1. May also interact with other nuclear hormone receptors such as NR3C1/GR. In terms of tissue distribution, expressed in bone, brain, heart, kidney, liver, lung, pancreas and placenta.

Its subcellular location is the nucleus. In terms of biological role, may repress E2F-dependent transcription. May promote AR-dependent transcription. This Homo sapiens (Human) protein is RB-associated KRAB zinc finger protein (RBAK).